Here is a 256-residue protein sequence, read N- to C-terminus: 5-oxoprolinase subunit A (256 aa).

This sequence belongs to the LamB/PxpA family. As to quaternary structure, forms a complex composed of PxpA, PxpB and PxpC.

It carries out the reaction 5-oxo-L-proline + ATP + 2 H2O = L-glutamate + ADP + phosphate + H(+). In terms of biological role, catalyzes the cleavage of 5-oxoproline to form L-glutamate coupled to the hydrolysis of ATP to ADP and inorganic phosphate. The protein is 5-oxoprolinase subunit A of Geobacillus thermodenitrificans (strain NG80-2).